The sequence spans 371 residues: Flagellar P-ring protein 1 (371 aa).

The signal sequence occupies residues 1–19 (MRRALLLAALLACAPPAFA).

It belongs to the FlgI family. As to quaternary structure, the basal body constitutes a major portion of the flagellar organelle and consists of four rings (L,P,S, and M) mounted on a central rod.

Its subcellular location is the periplasm. It is found in the bacterial flagellum basal body. In terms of biological role, assembles around the rod to form the L-ring and probably protects the motor/basal body from shearing forces during rotation. In Cereibacter sphaeroides (strain ATCC 17023 / DSM 158 / JCM 6121 / CCUG 31486 / LMG 2827 / NBRC 12203 / NCIMB 8253 / ATH 2.4.1.) (Rhodobacter sphaeroides), this protein is Flagellar P-ring protein 1.